Consider the following 163-residue polypeptide: MFQRITQAVKGAALLDFAGAFGLAMKYMVAPKKTVIYPNERNPQSPRFRGEHALRRYPSGEERCIACKLCEAICPAQAITIEAEPREDGSRRTTRYDIDMVKCIYCGLCQEACPVDAIVEGPNTEFATETREELYYDKERLLDNGDRWERLIAKNLELDAPYR.

4Fe-4S ferredoxin-type domains lie at 55 to 84 and 94 to 123; these read RRYP…IEAE and TRYD…EGPN. Cys-64, Cys-67, Cys-70, Cys-74, Cys-103, Cys-106, Cys-109, and Cys-113 together coordinate [4Fe-4S] cluster.

Belongs to the complex I 23 kDa subunit family. NDH-1 is composed of 14 different subunits. Subunits NuoA, H, J, K, L, M, N constitute the membrane sector of the complex. Requires [4Fe-4S] cluster as cofactor.

The protein resides in the cell inner membrane. It carries out the reaction a quinone + NADH + 5 H(+)(in) = a quinol + NAD(+) + 4 H(+)(out). NDH-1 shuttles electrons from NADH, via FMN and iron-sulfur (Fe-S) centers, to quinones in the respiratory chain. The immediate electron acceptor for the enzyme in this species is believed to be ubiquinone. Couples the redox reaction to proton translocation (for every two electrons transferred, four hydrogen ions are translocated across the cytoplasmic membrane), and thus conserves the redox energy in a proton gradient. The polypeptide is NADH-quinone oxidoreductase subunit I (Caulobacter vibrioides (strain ATCC 19089 / CIP 103742 / CB 15) (Caulobacter crescentus)).